Here is a 1384-residue protein sequence, read N- to C-terminus: DNA-directed RNA polymerase subunit beta (1384 aa).

Belongs to the RNA polymerase beta chain family. As to quaternary structure, the RNAP catalytic core consists of 2 alpha, 1 beta, 1 beta' and 1 omega subunit. When a sigma factor is associated with the core the holoenzyme is formed, which can initiate transcription.

The enzyme catalyses RNA(n) + a ribonucleoside 5'-triphosphate = RNA(n+1) + diphosphate. Its function is as follows. DNA-dependent RNA polymerase catalyzes the transcription of DNA into RNA using the four ribonucleoside triphosphates as substrates. The sequence is that of DNA-directed RNA polymerase subunit beta from Xylella fastidiosa (strain M23).